Consider the following 332-residue polypeptide: Melanocortin receptor 4 (332 aa).

Topologically, residues 1–43 (MNSTHHHGMYTSLHLWNRSSYGLHGNASESLGKGHPDGGCYEQ) are extracellular. Residues Asn-2, Asn-17, and Asn-26 are each glycosylated (N-linked (GlcNAc...) asparagine). 2 cysteine pairs are disulfide-bonded: Cys-40–Cys-279 and Cys-271–Cys-277. The helical transmembrane segment at 44-69 (LFVSPEVFVTLGVISLLENILVIVAI) threads the bilayer. The Cytoplasmic segment spans residues 70-81 (AKNKNLHSPMYF). Residues 82 to 106 (FICSLAVADMLVSVSNGSETIVITL) form a helical membrane-spanning segment. Ca(2+) is bound at residue Glu-100. The Extracellular segment spans residues 107–123 (LNSTDTDAQSFTVNIDN). Asn-108 is a glycosylation site (N-linked (GlcNAc...) asparagine). Residues Asp-122 and Asp-126 each coordinate Ca(2+). A helical transmembrane segment spans residues 124–145 (VIDSVICSSLLASICSLLSIAV). Topologically, residues 146-165 (DRYFTIFYALQYHNIMTVRR) are cytoplasmic. Residues 166-186 (VGIIISCIWAACTVSGVLFII) traverse the membrane as a helical segment. Topologically, residues 187–191 (YSDSS) are extracellular. A helical membrane pass occupies residues 192–215 (AVIICLISMFFTMLVLMASLYVHM). The Cytoplasmic portion of the chain corresponds to 216–248 (FLMARLHIKRIAVLPGTGTIRQGTNMKGAITLT). A helical membrane pass occupies residues 249–271 (ILIGVFVVCWAPFFLHLLFYISC). The Extracellular portion of the chain corresponds to 272 to 280 (PQNPYCVCF). The helical transmembrane segment at 281–304 (MSHFNLYLILIMCNAVIDPLIYAL) threads the bilayer. At 305–332 (RSQELRKTFKEIICFYPLGGICELSSRY) the chain is on the cytoplasmic side. Cys-318 carries S-palmitoyl cysteine lipidation.

The protein belongs to the G-protein coupled receptor 1 family. Homodimer; disulfide-linked, also forms higher order oligomers. Interacts with GNAS. Interacts with ATRNL1. Interacts with MGRN1; this interaction competes with GNAS-binding and thus inhibits agonist-induced cAMP production. Interacts with MRAP and MRAP2; these associated factors increase ligand-sensitivity and generation of cAMP.

The protein resides in the cell membrane. Functionally, hormone receptor that acts as a key component of the leptin-melanocortin pathway at the intersection of homeostatic maintenance of energetic state. Plays a role in regulating food intake: activation by a stimulating hormone such as anorexigenic alpha-melanocyte stimulating hormone (alpha-MSH) inhibits appetite, whereas binding to a natural antagonist like Agouti-related protein/AGRP promotes appetite. G-protein-coupled receptor that activates conventional Galphas signaling leading to induction of anorexogenic signaling in the hypothalamus to result in negative energy balance. Regulates the firing activity of neurons from the hypothalamus by alpha-MSH and AGRP independently of Galphas signaling by ligand-induced coupling of closure of inwardly rectifying potassium channel KCNJ13. In intestinal epithelial cells, plays a role in the inhibition of hepatic glucose production via nesfatin-1/NUCB2 leading to increased cyclic adenosine monophosphate (cAMP) levels and glucagon-like peptide 1 (GLP-1) secretion in the intestinal epithelium. The chain is Melanocortin receptor 4 (Mc4r) from Mus musculus (Mouse).